The sequence spans 291 residues: MKHSLSRFFGLGDKEHPERETEIEAEIAEHDTLKEEIQELPVDTIMPNRFQPRTIFSEEKIHELATTIHTHGIIQPIVVRPTEEEGKYELIAGERRWRAVQTLQWEKIPAIIKDFTDTETASVALIENLQREELSAIEEAHAYARLLELHDLTQEALAQRLGKGQSTVANKLRLLKLPEEVQQAILEKKISERHARSLVPLKLPELQIALLQEIIEKQLNVKQTEERVVKMLEQKTDRKPRPKRKAFSRDTRIAMNTIRQSLHMVEDSGLKINTEEEEFEEYIQLTIRIPK.

Positions 155–174 (EALAQRLGKGQSTVANKLRL) form a DNA-binding region, H-T-H motif.

It belongs to the ParB family.

The protein resides in the cytoplasm. The protein localises to the nucleoid. Effects nucleoid occlusion by binding relatively nonspecifically to DNA and preventing the assembly of the division machinery in the vicinity of the nucleoid, especially under conditions that disturb the cell cycle. It helps to coordinate cell division and chromosome segregation by preventing the formation of the Z ring through the nucleoid, which would cause chromosome breakage. The polypeptide is Nucleoid occlusion protein (Bacillus pumilus (strain SAFR-032)).